Reading from the N-terminus, the 984-residue chain is Mineralocorticoid receptor (984 aa).

The segment at 1 to 602 is modulating; the sequence is METKGYHSLP…STGSSRPSKI (602 aa). The segment covering 231–243 has biased composition (polar residues); sequence QGTPLTCSPNVEN. Disordered regions lie at residues 231 to 329 and 347 to 373; these read QGTP…AAST and GTSA…QEVP. 5 positions are modified to phosphoserine: serine 250, serine 259, serine 283, serine 287, and serine 299. Positions 259 to 291 are enriched in low complexity; sequence SPLSSPLSSMKSSISSPPSHCSVKSPVSSPNNV. The segment covering 292 to 329 has biased composition (polar residues); sequence TLRSSVSSPANINNSRCSVSSPSNTNNRSTLSSPAAST. The Zn(2+) site is built by cysteine 603, cysteine 606, cysteine 620, cysteine 623, cysteine 639, cysteine 645, cysteine 655, and cysteine 658. 2 NR C4-type zinc fingers span residues 603–623 and 639–663; these read CLVC…CGSC and CAGR…LQKC. The nuclear receptor DNA-binding region spans 603–668; sequence CLVCGDEASG…RLQKCLQAGM (66 aa). The tract at residues 669-725 is hinge; the sequence is NLGARKSKKLGKLKGIHEEQPQQQQPPPPPPPPQSPEEGTTYIAPAKEPSVNTALVP. The interval 684-710 is disordered; it reads IHEEQPQQQQPPPPPPPPQSPEEGTTY. Positions 692–703 are enriched in pro residues; it reads QQPPPPPPPPQS. Residues 726-964 enclose the NR LBD domain; that stretch reads QLSTISRALT…EFPAMLVEII (239 aa). Residues asparagine 770 and glutamine 776 each coordinate 21-hydroxyprogesterone. Residues asparagine 770 and glutamine 776 each coordinate aldosterone. Progesterone contacts are provided by asparagine 770 and glutamine 776. The interval 782-785 is important for coactivator binding; sequence KWAK. The 21-hydroxyprogesterone site is built by arginine 817 and threonine 945. Residues arginine 817 and threonine 945 each coordinate aldosterone. Positions 817 and 945 each coordinate progesterone.

This sequence belongs to the nuclear hormone receptor family. NR3 subfamily. In terms of assembly, heteromultimeric cytoplasmic complex with HSP90, HSP70, and FKBP4, in the absence of ligand. After ligand binding, it translocates to the nucleus and binds to DNA as a homodimer and as a heterodimer with NR3C1. May interact with HSD11B2 in the absence of ligand. Binds the coactivators NCOA1, NCOA2, TIF1 and NRIP1. Phosphorylated. In terms of tissue distribution, ubiquitous. Highly expressed in distal tubules, convoluted tubules and cortical collecting duct in kidney, and in sweat glands. Detected at lower levels in cardiomyocytes, in epidermis and in colon enterocytes.

The protein resides in the cytoplasm. It is found in the nucleus. The protein localises to the endoplasmic reticulum membrane. Its function is as follows. Receptor for both mineralocorticoids (MC) such as aldosterone and glucocorticoids (GC) such as corticosterone or cortisol. Binds to mineralocorticoid response elements (MRE) and transactivates target genes. The effect of MC is to increase ion and water transport and thus raise extracellular fluid volume and blood pressure and lower potassium levels. The polypeptide is Mineralocorticoid receptor (NR3C2) (Homo sapiens (Human)).